We begin with the raw amino-acid sequence, 511 residues long: Trigger factor (511 aa).

Residues 168 to 253 (GDLLTIDFVG…VKEVKAPAEV (86 aa)) enclose the PPIase FKBP-type domain. Positions 446–511 (DEHEHHHHDH…KAPAKKKKED (66 aa)) are disordered. The segment covering 455 to 478 (HDHDHDHDHDHDHGHDHDHGDEKP) has biased composition (basic and acidic residues). The span at 479–488 (KKKPAAKKAA) shows a compositional bias: basic residues. A compositionally biased stretch (basic and acidic residues) spans 489–498 (AKSDDGEAKP). Basic residues predominate over residues 499–511 (AAKKAPAKKKKED).

Belongs to the FKBP-type PPIase family. Tig subfamily.

The protein resides in the cytoplasm. It carries out the reaction [protein]-peptidylproline (omega=180) = [protein]-peptidylproline (omega=0). Involved in protein export. Acts as a chaperone by maintaining the newly synthesized protein in an open conformation. Functions as a peptidyl-prolyl cis-trans isomerase. The polypeptide is Trigger factor (Parvibaculum lavamentivorans (strain DS-1 / DSM 13023 / NCIMB 13966)).